Consider the following 72-residue polypeptide: Exodeoxyribonuclease 7 small subunit (72 aa).

This sequence belongs to the XseB family. As to quaternary structure, heterooligomer composed of large and small subunits.

It localises to the cytoplasm. It carries out the reaction Exonucleolytic cleavage in either 5'- to 3'- or 3'- to 5'-direction to yield nucleoside 5'-phosphates.. Its function is as follows. Bidirectionally degrades single-stranded DNA into large acid-insoluble oligonucleotides, which are then degraded further into small acid-soluble oligonucleotides. The chain is Exodeoxyribonuclease 7 small subunit from Chlamydia trachomatis serovar D (strain ATCC VR-885 / DSM 19411 / UW-3/Cx).